Here is a 465-residue protein sequence, read N- to C-terminus: VGFKAGVKDYKLTYYTPEYNPKDTDILAAFRVTPQPGVPAEEAGAAVAAESSTGTWTTVWTDGLTSLDRYKGRCYDIEPVAGEESQFIAYVAYPLDLFEEGSVTNMFTSIVGNVFGFKALXXLRLEDLRIPPAYSKTFQGPPHGIQVERDKLNKYGRPLLGCTIKPKLGLSAKNYGRAVYECLRGGLDFTKDDENVNSQPFMRWRDRFLFCAEAIYKAQAETGEIKGHYLNATAGTCEEMMKRAIFARELGVPIVMHDYLTGGFTANTSLARYCRDNGLLLHIHRAMHAVIDRQKNHGMHFRVLAKALRMSGGDHIHAGTVVGKLEGERDITLGFVDLLRDDFVEKDRSRGIYFTQDWVSLPGVIPVASGGIHVWHMPALTEIFGDDSVLQFGGGTLGHPWGNAPGAVANRVALEACVQARNEGRDLAREGNEIIRSAAKWSPELAAACEVWKEIKFEFPAMDTL.

K4 carries the N6,N6,N6-trimethyllysine modification. Substrate is bound by residues N113 and T163. K165 (proton acceptor) is an active-site residue. K167 lines the substrate pocket. Mg(2+) is bound by residues K191, D193, and E194. The residue at position 191 (K191) is an N6-carboxylysine. The active-site Proton acceptor is H284. Substrate-binding residues include R285, H317, and S369.

Belongs to the RuBisCO large chain family. Type I subfamily. Heterohexadecamer of 8 large chains and 8 small chains; disulfide-linked. The disulfide link is formed within the large subunit homodimers. It depends on Mg(2+) as a cofactor. Post-translationally, the disulfide bond which can form in the large chain dimeric partners within the hexadecamer appears to be associated with oxidative stress and protein turnover.

The protein localises to the plastid. It localises to the chloroplast. The catalysed reaction is 2 (2R)-3-phosphoglycerate + 2 H(+) = D-ribulose 1,5-bisphosphate + CO2 + H2O. It catalyses the reaction D-ribulose 1,5-bisphosphate + O2 = 2-phosphoglycolate + (2R)-3-phosphoglycerate + 2 H(+). Functionally, ruBisCO catalyzes two reactions: the carboxylation of D-ribulose 1,5-bisphosphate, the primary event in carbon dioxide fixation, as well as the oxidative fragmentation of the pentose substrate in the photorespiration process. Both reactions occur simultaneously and in competition at the same active site. This chain is Ribulose bisphosphate carboxylase large chain, found in Passiflora quadrangularis (Grenadine).